The chain runs to 136 residues: MLQPKRMKFRKMFKGRNRGLANGTEVSFGEFGLKAVGRGRLTARQIEAARRAMTRHIKRQGQIWIRVFPDKPITSKPLEVRMGKGKGNVEYWVCQIQPGKVLYEMNGVSEELAREAFTLAAAKLPLKTTFVTKTVM.

The protein belongs to the universal ribosomal protein uL16 family. Part of the 50S ribosomal subunit.

In terms of biological role, binds 23S rRNA and is also seen to make contacts with the A and possibly P site tRNAs. This Shewanella halifaxensis (strain HAW-EB4) protein is Large ribosomal subunit protein uL16.